The sequence spans 580 residues: 2-hydroxyacyl-CoA lyase 1 (580 aa).

Glu47 contributes to the thiamine diphosphate binding site. The interval 413 to 494 (TMDIGRLCIP…FIVLNNNGVY (82 aa)) is thiamine pyrophosphate binding. Residues Asp463 and Asn490 each contribute to the Mg(2+) site.

It belongs to the TPP enzyme family. In terms of assembly, homotetramer. It depends on Mg(2+) as a cofactor. Requires thiamine diphosphate as cofactor.

The protein localises to the peroxisome. The enzyme catalyses a 2-hydroxy-3-methyl fatty acyl-CoA = a 2-methyl-branched fatty aldehyde + formyl-CoA. It carries out the reaction an (R)-2-hydroxy-long-chain-fatty acyl-CoA = a long-chain fatty aldehyde + formyl-CoA. It catalyses the reaction 2-hydroxy-3-methylhexadecanoyl-CoA = 2-methylpentadecanal + formyl-CoA. The catalysed reaction is 2-hydroxyoctadecanoyl-CoA = heptadecanal + formyl-CoA. Functionally, peroxisomal 2-OH acyl-CoA lyase involved in the cleavage (C1 removal) reaction in the fatty acid alpha-oxydation in a thiamine pyrophosphate (TPP)-dependent manner. Involved in the degradation of 3-methyl-branched fatty acids and the shortening of 2-hydroxy long-chain fatty acids. The chain is 2-hydroxyacyl-CoA lyase 1 (hacl1) from Dictyostelium discoideum (Social amoeba).